The primary structure comprises 31 residues: MLAIVAYIGFLALFTGIAAGLLFGLRSAKIL.

A helical membrane pass occupies residues alanine 3–phenylalanine 23.

It belongs to the PetL family. As to quaternary structure, the 4 large subunits of the cytochrome b6-f complex are cytochrome b6, subunit IV (17 kDa polypeptide, PetD), cytochrome f and the Rieske protein, while the 4 small subunits are PetG, PetL, PetM and PetN. The complex functions as a dimer.

The protein localises to the cellular thylakoid membrane. Component of the cytochrome b6-f complex, which mediates electron transfer between photosystem II (PSII) and photosystem I (PSI), cyclic electron flow around PSI, and state transitions. PetL is important for photoautotrophic growth as well as for electron transfer efficiency and stability of the cytochrome b6-f complex. This is Cytochrome b6-f complex subunit 6 from Nostoc sp. (strain PCC 7120 / SAG 25.82 / UTEX 2576).